The sequence spans 285 residues: Transcription initiation factor IIE subunit beta (285 aa).

2 stretches are compositionally biased toward polar residues: residues 1–10 and 33–44; these read MSSLSDQLSS and TPTAYLNSNDGH. Residues 1 to 56 form a disordered region; that stretch reads MSSLSDQLSSFKKKVANQPIYAKPQPRQPASPTPTAYLNSNDGHSSAASSPGSYSL. A compositionally biased stretch (low complexity) spans 45–55; the sequence is SSAASSPGSYS. The segment at residues 67–142 is a DNA-binding region (TFIIE beta); the sequence is YSQPADSGVG…FTFKPLHNIR (76 aa). Residues 240–272 form a disordered region; that stretch reads PTSVDPSTVKRAGHNQTPKQKKPKTRRGKITNT. A compositionally biased stretch (basic residues) spans 258–268; the sequence is KQKKPKTRRGK.

This sequence belongs to the TFIIE beta subunit family. TFIIE is a tetramer of two alpha (tfa1) and two beta (tfa2) subunits. TFIIE associates with RNA polymerase II via the beta subunit.

Its subcellular location is the nucleus. In terms of biological role, recruits TFIIH to the initiation complex and stimulates the RNA polymerase II C-terminal domain kinase and DNA-dependent ATPase activities of TFIIH. Both TFIIH and TFIIE are required for promoter clearance by RNA polymerase. In Schizosaccharomyces pombe (strain 972 / ATCC 24843) (Fission yeast), this protein is Transcription initiation factor IIE subunit beta (tfa2).